An 808-amino-acid chain; its full sequence is Phospholipase D alpha 1 (808 aa).

Positions 1 to 125 constitute a C2 domain; that stretch reads MSKVLLHGTL…LDGDEVDKWI (125 aa). Asp186 is a Ca(2+) binding site. The PLD phosphodiesterase 1 domain maps to 326-364; it reads TMFTHHQKIVVVDHELPRGGSQKRRVMSFVGGIDLCDGR. Catalysis depends on residues His331, Lys333, and Asp338. His331 provides a ligand contact to a 1,2-diacyl-sn-glycero-3-phosphate. His370 and His404 together coordinate Ca(2+). The a 1,2-diacyl-sn-glycero-3-phosphate site is built by Gln520 and His659. Residues 654–681 enclose the PLD phosphodiesterase 2 domain; that stretch reads FMIYVHSKMMIVDDEYIIVGSANINQRS. Active-site residues include His659, Lys661, and Asp666. Glu720 lines the Ca(2+) pocket.

This sequence belongs to the phospholipase D family. C2-PLD subfamily. In terms of assembly, interacts (via C2 domain) with CARDA (via RGD or KGE motifs). Requires Ca(2+) as cofactor.

The catalysed reaction is a 1,2-diacyl-sn-glycero-3-phosphocholine + H2O = a 1,2-diacyl-sn-glycero-3-phosphate + choline + H(+). Its function is as follows. Hydrolyzes glycerol-phospholipids at the terminal phosphodiesteric bond. Plays an important role in various cellular processes. The polypeptide is Phospholipase D alpha 1 (Cynara cardunculus (Cardoon)).